A 748-amino-acid polypeptide reads, in one-letter code: Catalase-peroxidase (748 aa).

The segment covering 1–16 (MSSDTSASRPPQPDTR) has biased composition (polar residues). The disordered stretch occupies residues 1-43 (MSSDTSASRPPQPDTRTASKSESENPAIPSPHPKSNAPLTNRD). Residues 113–238 (WHAAGTYRIH…YGATTMGLIY (126 aa)) constitute a cross-link (tryptophyl-tyrosyl-methioninium (Trp-Tyr) (with M-264)). His114 serves as the catalytic Proton acceptor. The segment at residues 238 to 264 (YVNPEGPEGKPDPIAAAIDIRETFGRM) is a cross-link (tryptophyl-tyrosyl-methioninium (Tyr-Met) (with W-113)). A heme b-binding site is contributed by His279.

It belongs to the peroxidase family. Peroxidase/catalase subfamily. In terms of assembly, homodimer or homotetramer. Heme b is required as a cofactor. Post-translationally, formation of the three residue Trp-Tyr-Met cross-link is important for the catalase, but not the peroxidase activity of the enzyme.

It carries out the reaction H2O2 + AH2 = A + 2 H2O. The catalysed reaction is 2 H2O2 = O2 + 2 H2O. Functionally, bifunctional enzyme with both catalase and broad-spectrum peroxidase activity. The chain is Catalase-peroxidase from Mycolicibacterium paratuberculosis (strain ATCC BAA-968 / K-10) (Mycobacterium paratuberculosis).